The following is a 491-amino-acid chain: Aspartyl/glutamyl-tRNA(Asn/Gln) amidotransferase subunit B (491 aa).

Belongs to the GatB/GatE family. GatB subfamily. In terms of assembly, heterotrimer of A, B and C subunits.

It carries out the reaction L-glutamyl-tRNA(Gln) + L-glutamine + ATP + H2O = L-glutaminyl-tRNA(Gln) + L-glutamate + ADP + phosphate + H(+). It catalyses the reaction L-aspartyl-tRNA(Asn) + L-glutamine + ATP + H2O = L-asparaginyl-tRNA(Asn) + L-glutamate + ADP + phosphate + 2 H(+). Functionally, allows the formation of correctly charged Asn-tRNA(Asn) or Gln-tRNA(Gln) through the transamidation of misacylated Asp-tRNA(Asn) or Glu-tRNA(Gln) in organisms which lack either or both of asparaginyl-tRNA or glutaminyl-tRNA synthetases. The reaction takes place in the presence of glutamine and ATP through an activated phospho-Asp-tRNA(Asn) or phospho-Glu-tRNA(Gln). The sequence is that of Aspartyl/glutamyl-tRNA(Asn/Gln) amidotransferase subunit B from Nostoc sp. (strain PCC 7120 / SAG 25.82 / UTEX 2576).